Consider the following 534-residue polypeptide: Acyl-CoA-binding domain-containing protein 5 (534 aa).

Residues 41-130 (HETRFEAAVK…MKKIIETMPM (90 aa)) form the ACB domain. An an acyl-CoA-binding site is contributed by 52–61 (IQSLPKNGSF). The residue at position 63 (P63) is a Phosphothreonine. Residues 72–76 (YSFYK), K98, and Y117 contribute to the an acyl-CoA site. 2 positions are modified to phosphothreonine: L137 and E172. A disordered region spans residues 181–225 (TPNAKTVNGKAESSDSGAESEEEEAQEEVKGAEQSDNDKKMMKKS). Residues 190–219 (KAESSDSGAESEEEEAQEEVKGAEQSDNDK) adopt a coiled-coil conformation. 7 positions are modified to phosphoserine: S193, S194, S196, S200, S215, S279, and S313. The span at 207-225 (EEVKGAEQSDNDKKMMKKS) shows a compositional bias: basic and acidic residues. The span at 376–385 (EVKHGGEDGR) shows a compositional bias: basic and acidic residues. Residues 376–442 (EVKHGGEDGR…ERWGSDRGSR (67 aa)) form a disordered region. Phosphothreonine is present on T400. Position 428 is a phosphoserine (S428). Residues 431–441 (DGERWGSDRGS) show a composition bias toward basic and acidic residues. The stretch at 447 to 476 (EQIALVLMRLQEDMQNVLQRLQKLETLTAL) forms a coiled coil. K469 carries the N6-acetyllysine modification. The helical transmembrane segment at 506–526 (GVLTFAIIWPFIAQWLVYLYY) threads the bilayer.

The protein belongs to the ATG37 family.

The protein resides in the peroxisome membrane. Acyl-CoA binding protein which acts as the peroxisome receptor for pexophagy but is dispensable for aggrephagy and nonselective autophagy. Binds medium- and long-chain acyl-CoA esters. The protein is Acyl-CoA-binding domain-containing protein 5 (ACBD5) of Homo sapiens (Human).